The primary structure comprises 165 residues: MSRNGNFIDKTFSVVANILLQIIPTTSGEKEAFTYYRDGMSAQSEGNYAEALQNYYEAMRLEIDPYDRSYILYNIGLIHTSNGEHTKALEYYFRALERNPFLPQAFNNMAVICHYRGEQAIRQGDSEIAEAWFDQAAEYWKQALTLTPGNYIEAHNWLKITGRFE.

3 TPR repeats span residues 32-65 (AFTYYRDGMSAQSEGNYAEALQNYYEAMRLEIDP), 69-102 (SYILYNIGLIHTSNGEHTKALEYYFRALERNPFL), and 117-150 (GEQAIRQGDSEIAEAWFDQAAEYWKQALTLTPGN).

This sequence belongs to the Ycf3 family.

The protein resides in the plastid. It localises to the chloroplast thylakoid membrane. Functionally, essential for the assembly of the photosystem I (PSI) complex. May act as a chaperone-like factor to guide the assembly of the PSI subunits. The chain is Photosystem I assembly protein Ycf3 from Spinacia oleracea (Spinach).